The chain runs to 1061 residues: Ceruloplasmin (1061 aa).

Residues 1–19 (MKFLLLSTFIFLYSSLALA) form the signal peptide. Plastocyanin-like domains are found at residues 20-199 (RDKH…LILC), 208-356 (KEKN…VRDC), 369-555 (HVRH…MKIC), 565-713 (RQKD…VNQC), 725-895 (GERT…LIVC), and 903-1057 (FSPK…VEQE). Positions 55, 64, and 67 each coordinate Na(+). Cu(2+) contacts are provided by histidine 120 and histidine 122. Residue histidine 120 coordinates O2. Position 128 (lysine 128) interacts with Ca(2+). Asparagine 138 carries N-linked (GlcNAc...) asparagine glycosylation. 3 residues coordinate Ca(2+): glutamine 143, aspartate 146, and aspartate 147. Cysteines 173 and 199 form a disulfide. Cu(2+) is bound by residues histidine 179 and histidine 181. An O2-binding site is contributed by histidine 179. Residue asparagine 226 is glycosylated (N-linked (GlcNAc...) asparagine). Residue serine 255 participates in Na(+) binding. A disulfide bond links cysteine 275 and cysteine 356. Residues histidine 294, cysteine 337, and histidine 342 each contribute to the Cu(2+) site. An N-linked (GlcNAc...) asparagine glycan is attached at asparagine 396. Positions 407, 416, and 419 each coordinate Na(+). Residues cysteine 529 and cysteine 555 are joined by a disulfide bond. N-linked (GlcNAc...) asparagine glycosylation is present at asparagine 583. Residue serine 612 participates in Na(+) binding. The cysteines at positions 632 and 713 are disulfide-linked. Positions 651, 694, 699, and 704 each coordinate Cu(2+). Cysteine 694 functions as the Nucleophile; for glutathione peroxidase activity in the catalytic mechanism. A glycan (N-linked (GlcNAc...) asparagine) is linked at asparagine 757. Na(+)-binding residues include phenylalanine 762, glycine 771, and tyrosine 774. Cysteine 869 and cysteine 895 are disulfide-bonded. A glycan (N-linked (GlcNAc...) asparagine) is linked at asparagine 921. Residue serine 950 participates in Na(+) binding. The Cu(2+) site is built by histidine 989, histidine 992, histidine 994, histidine 1034, cysteine 1035, histidine 1036, histidine 1040, and methionine 1045. O2 is bound by residues histidine 992 and histidine 994. Histidine 1036 serves as a coordination point for O2.

Belongs to the multicopper oxidase family. As to quaternary structure, found in a complex with MPO and LTF; interacts directly with MPO and LTF, which allows Fe(3+) incorporation into LTF, activation of CP ferroxidase activity and protection of CP antioxidant properties by MPO. It depends on Cu(2+) as a cofactor. In terms of tissue distribution, expressed in many tissues, including liver, eye and brain.

Its subcellular location is the secreted. It catalyses the reaction 4 Fe(2+) + O2 + 4 H(+) = 4 Fe(3+) + 2 H2O. The catalysed reaction is 4 Cu(+) + O2 + 4 H(+) = 4 Cu(2+) + 2 H2O. It carries out the reaction a hydroperoxide + 2 glutathione = an alcohol + glutathione disulfide + H2O. The enzyme catalyses 4 nitric oxide + O2 + 2 H2O = 4 nitrite + 4 H(+). It catalyses the reaction 2 glutathione + H2O2 = glutathione disulfide + 2 H2O. Its function is as follows. Multifunctional blue, copper-binding (6-7 atoms per molecule) glycoprotein. It has ferroxidase activity oxidizing Fe(2+) to Fe(3+) without releasing radical oxygen species. It is involved in iron transport across the cell membrane. Copper ions provide a large number of enzymatic activites. Oxidizes highly toxic ferrous ions to the ferric state for further incorporation onto apo-transferrins, catalyzes Cu(+) oxidation and promotes the oxidation of biogenic amines such as norepinephrin and serotonin. Provides Cu(2+) ions for the ascorbate-mediated deaminase degradation of the heparan sulfate chains of GPC1. Has glutathione peroxidase-like activity, can remove both hydrogen peroxide and lipid hydroperoxide in the presence of thiols. Also shows NO-oxidase and NO2 synthase activities that determine endocrine NO homeostasis. The polypeptide is Ceruloplasmin (Cp) (Mus musculus (Mouse)).